Here is a 158-residue protein sequence, read N- to C-terminus: Transcriptional repressor NrdR (158 aa).

The segment at 3–34 (CPYCQSEDTQVKDSRPAEDGAVIRRRRVCSVC) is a zinc-finger region. Positions 49-139 (LMVVKKSGRR…VYRNFSKAVD (91 aa)) constitute an ATP-cone domain.

It belongs to the NrdR family. Zn(2+) is required as a cofactor.

Its function is as follows. Negatively regulates transcription of bacterial ribonucleotide reductase nrd genes and operons by binding to NrdR-boxes. The sequence is that of Transcriptional repressor NrdR from Brucella abortus (strain S19).